An 858-amino-acid chain; its full sequence is GDP-fucose protein O-fucosyltransferase 2 (858 aa).

The Cytoplasmic portion of the chain corresponds to 1 to 150; the sequence is MHCQLGGQAR…RPPCLLNHRR (150 aa). A helical; Signal-anchor for type II membrane protein transmembrane segment spans residues 151-171; the sequence is LLLGLVSVLTVFLSCLPFTNA. Over 172–858 the chain is Lumenal; the sequence is TVSPAALQDV…WPSLDPSSTL (687 aa). 237-241 is a GDP-beta-L-fucose binding site; that stretch reads GEGFH. The active-site Proton acceptor is the E238. The tract at residues 448–510 is disordered; that stretch reads AALTPQERQR…SRSRKEIQEE (63 aa). Over residues 486–510 the composition is skewed to basic and acidic residues; that stretch reads DGEREKRKPGRRSDTSRSRKEIQEE. Residues 646–648 and 787–788 contribute to the GDP-beta-L-fucose site; these read HLR and RF. The segment at 819 to 858 is disordered; the sequence is TGGQAQGKCFATKSHDPPEGRSRSELRRKYWPSLDPSSTL. The segment covering 831 to 846 has biased composition (basic and acidic residues); it reads KSHDPPEGRSRSELRR.

This sequence belongs to the glycosyltransferase 68 family.

Its subcellular location is the endoplasmic reticulum membrane. The enzyme catalyses L-seryl-[protein] + GDP-beta-L-fucose = 3-O-(alpha-L-fucosyl)-L-seryl-[protein] + GDP + H(+). It carries out the reaction L-threonyl-[protein] + GDP-beta-L-fucose = 3-O-(alpha-L-fucosyl)-L-threonyl-[protein] + GDP + H(+). The protein operates within protein modification; protein glycosylation. Its function is as follows. Catalyzes the reaction that attaches fucose through an O-glycosidic linkage to a conserved serine or threonine residue in the consensus sequence C1-X-X-S/T-C2 of thrombospondin type I repeats (TSRs) where C1 and C2 are the first and second cysteines of the repeat, respectively. O-fucosylates microneme protein MIC2 and may play a role in its stabilization. Probably by regulating protein O-fucosylation, may play a role in tachyzoite adhesion to and/or invasion of host cells; however, POFUT2 involvement in adhesion/invasion is controversial. The chain is GDP-fucose protein O-fucosyltransferase 2 from Toxoplasma gondii (strain ATCC 50853 / GT1).